Consider the following 2118-residue polypeptide: Separin (2118 aa).

Phosphoserine is present on Ser-1121. Positions 1309 to 1318 (KCSGRGRRRI) are enriched in basic residues. Residues 1309-1352 (KCSGRGRRRIASVPPPLHNSSQKGLEEEGPPCTPKPPGRARQAG) form a disordered region. Ser-1391 and Ser-1394 each carry phosphoserine. The interval 1408–1428 (EEPKRRGTASRTRGQTRKGRS) is disordered. Ser-1504 bears the Phosphoserine mark. The Peptidase C50 domain occupies 1941-2036 (PQNTFYVLNP…SAALAVHGNL (96 aa)). Residue Cys-2025 is part of the active site.

Interacts with PTTG1. Interacts with RAD21. Autocleaves. This function, which is not essential for its protease activity, is unknown. In terms of processing, phosphorylated by CDK1. There is 8 Ser/Thr phosphorylation sites. Among them, only Ser-1121 phosphorylation is the major site, which conducts to the enzyme inactivation.

The protein localises to the cytoplasm. It is found in the nucleus. The enzyme catalyses All bonds known to be hydrolyzed by this endopeptidase have arginine in P1 and an acidic residue in P4. P6 is often occupied by an acidic residue or by a hydroxy-amino-acid residue, the phosphorylation of which enhances cleavage.. Regulated by at least two independent mechanisms. First, it is inactivated via its interaction with securin/PTTG1, which probably covers its active site. The association with PTTG1 is not only inhibitory, since PTTG1 is also required for activating it, the enzyme being inactive in cells in which PTTG1 is absent. PTTG1 degradation at anaphase, liberates it and triggers RAD21 cleavage. Second, phosphorylation at Ser-1121 inactivates it. The complete phosphorylation during mitosis, is removed when cells undergo anaphase. Activation of the enzyme at the metaphase-anaphase transition probably requires the removal of both securin and inhibitory phosphate. Functionally, caspase-like protease, which plays a central role in the chromosome segregation by cleaving the SCC1/RAD21 subunit of the cohesin complex at the onset of anaphase. During most of the cell cycle, it is inactivated by different mechanisms. This Mus musculus (Mouse) protein is Separin (Espl1).